A 154-amino-acid polypeptide reads, in one-letter code: Ribonuclease H (154 aa).

Positions 1-142 (MTKQVEIFTD…CDELAREGAN (142 aa)) constitute an RNase H type-1 domain. Mg(2+) contacts are provided by Asp-10, Glu-48, Asp-70, and Asp-134.

It belongs to the RNase H family. Monomer. It depends on Mg(2+) as a cofactor.

It localises to the cytoplasm. It catalyses the reaction Endonucleolytic cleavage to 5'-phosphomonoester.. Its function is as follows. Endonuclease that specifically degrades the RNA of RNA-DNA hybrids. The protein is Ribonuclease H of Yersinia enterocolitica serotype O:8 / biotype 1B (strain NCTC 13174 / 8081).